The chain runs to 118 residues: GRB2-related adapter protein-like (118 aa).

Positions 1–58 (MESVALYSFQATESDELAFNKGDTLKILNMEDDQNWYKAELRGVEGFIPKNYIRVKPH) constitute an SH3 domain. The region spanning 60 to 118 (WYSGRISRQLAEEILMKRNHLGAFLIRESESSPGEFSVSVNNRAQRGPCLGPKSHSRLG) is the SH2 domain. The tract at residues 89–118 (ESSPGEFSVSVNNRAQRGPCLGPKSHSRLG) is disordered. Residues 90 to 103 (SSPGEFSVSVNNRA) show a composition bias toward polar residues.

Belongs to the GRB2/sem-5/DRK family.

This Homo sapiens (Human) protein is GRB2-related adapter protein-like (GRAPL).